We begin with the raw amino-acid sequence, 305 residues long: Protein FdhE homolog (305 aa).

It belongs to the FdhE family.

It is found in the cytoplasm. Necessary for formate dehydrogenase activity. In Stutzerimonas stutzeri (strain A1501) (Pseudomonas stutzeri), this protein is Protein FdhE homolog.